The primary structure comprises 453 residues: Na(+)/H(+) antiporter NhaA 2 (453 aa).

The next 11 membrane-spanning stretches (helical) occupy residues 32–52 (GALLLAGAVIALIWANSPGAA), 71–91 (LSLAAWAKDGLLAVFFFVAGL), 109–129 (AVPIAAAVGGVLAPAAVYVLI), 140–160 (GWAIPAATDIAFALAVLAVIG), 169–189 (VFLLTLAVVDDLIAIMIIAVF), 193–213 (NLSVTPLLATALPLVAFAILL), 232–252 (ALVHASGVHATVAGVLLALVV), 284–304 (AVPVFALMSAGVAIGGLGGLV), 310–330 (PVAIGVIAGLVIGKPLGVIAV), 356–376 (MLAGIGFTVSLLIGELSFAAG), and 382–402 (HVKIAIVTGSLIAAVLAAVIL). The interval 409–453 (GSRGNDATTRDPDQTRVGTATQRTTPDHPTPAATDANQPARSPAP) is disordered.

This sequence belongs to the NhaA Na(+)/H(+) (TC 2.A.33) antiporter family.

The protein localises to the cell membrane. It catalyses the reaction Na(+)(in) + 2 H(+)(out) = Na(+)(out) + 2 H(+)(in). In terms of biological role, na(+)/H(+) antiporter that extrudes sodium in exchange for external protons. In Salinispora tropica (strain ATCC BAA-916 / DSM 44818 / JCM 13857 / NBRC 105044 / CNB-440), this protein is Na(+)/H(+) antiporter NhaA 2.